Consider the following 367-residue polypeptide: Ribosomal lysine N-methyltransferase 5 (367 aa).

Residues 55 to 74 (EGGRKKKRVRRRNKASSVEE) are disordered. The segment covering 58–68 (RKKKRVRRRNK) has biased composition (basic residues). S-adenosyl-L-methionine contacts are provided by residues tryptophan 110, 170–172 (GAG), aspartate 192, tryptophan 256, and methionine 288.

Belongs to the class I-like SAM-binding methyltransferase superfamily. RKM5 family.

Its function is as follows. S-adenosyl-L-methionine-dependent protein-lysine N-methyltransferase that monomethylates 60S ribosomal protein L1 (RPL1A and RPL1B) at 'Lys-46'. In Saccharomyces cerevisiae (strain VIN 13) (Baker's yeast), this protein is Ribosomal lysine N-methyltransferase 5 (RKM5).